The chain runs to 928 residues: Mitogen-activated protein kinase kinase kinase dlk-1 (928 aa).

Positions 1 to 72 are disordered; it reads MTSTTMVTTL…GQKEGSPDPK (72 aa). Residues 42–52 are compositionally biased toward polar residues; that stretch reads LVTQSAPNTPI. The segment covering 53 to 69 has biased composition (basic and acidic residues); it reads QHREQANAEFGQKEGSP. One can recognise a Protein kinase domain in the interval 135–377; sequence ISELEWLGSG…FSHIRQHWEI (243 aa). ATP contacts are provided by residues 141-149 and lysine 162; that span reads LGSGSQGAV. Aspartate 246 acts as the Proton acceptor in catalysis. Residues 459–480 form a leucine-zipper region; sequence LQGCFTELKLKESELAEWEKDL. 3 disordered regions span residues 483–575, 644–696, and 802–845; these read REQW…DAIR, RRVS…PSRN, and ENAN…SMES. Acidic residues predominate over residues 509–519; sequence GYDDMSSDEDV. The span at 530–557 shows a compositional bias: low complexity; that stretch reads SNTSSSSGVQSSPFSRQSSSRSSAGQQT. An important for interaction between isoform a and isoform c region spans residues 605–814; it reads SAGAGSCTAI…NDVDLTSSMD (210 aa). Positions 647–656 are enriched in polar residues; that stretch reads STSVNKSTAV. A compositionally biased stretch (low complexity) spans 677-695; that stretch reads SCSSPRSSSKLNRSSYPSR. The segment covering 823–833 has biased composition (acidic residues); sequence ADVESSEEDEG. Serine 874 and serine 878 each carry phosphoserine. Residues 874-879 carry the SDGLSD hexapeptide motif; the sequence is SDGLSD.

The protein belongs to the protein kinase superfamily. STE Ser/Thr protein kinase family. MAP kinase kinase kinase subfamily. As to quaternary structure, homooligomer (via leucine zipper domain and hexapeptide motif). Isoform a (via leucine zipper domain) forms a heterooligomer with isoform c (via leucine zipper domain). Isoform c does not self-associate. Requires Mg(2+) as cofactor. Post-translationally, ubiquitinated by rpm-1. Negatively regulated by ubiquitination by fsn-1 bound rpm-1, followed by degradation. Phosphorylation at Ser-874 and/or at Ser-878 abolishes interaction with isoform c and promotes binding to isoform a kinase domain (likely in trans) resulting in isoform a self-association and activation. Expressed in nerve ring, nerve cord, neurons, and pharynx.

The protein resides in the synapse. It localises to the cytoplasm. The protein localises to the cell projection. It is found in the axon. Its subcellular location is the dendrite. The protein resides in the cilium. The catalysed reaction is L-seryl-[protein] + ATP = O-phospho-L-seryl-[protein] + ADP + H(+). It carries out the reaction L-threonyl-[protein] + ATP = O-phospho-L-threonyl-[protein] + ADP + H(+). Inactive when associated with isoform c. Dissociation from isoform c, which is dependent on the phosphorylation of the C-terminal hexapeptide, results in self-association and activation. Transient increase in Ca(2+) levels caused by axonal injury or synaptic activity triggers the dissociation of isoform a from isoform c; the dissociation may be influenced by the phosphorylation status of the C-terminal hexapeptide. Functionally, component of a MAP kinase pathway that functions presynaptically to regulate synaptic architecture and presynaptic differentiation. Phosphorylates and activates mkk-4. Has a role in axonal regrowth following injury and synaptogenesis. Plays a role in modulating polymerization of neuronal microtubules. Also promotes tubulin post-translational modifications that protect microtubules. Plays a role in cilium length regulation, possibly by reducing rab-5 mediated endocytosis, and may also have a role in intraflagellar transport in cilia. Plays a role in the formation of muscle connections, also called muscle arm extensions, between the body wall and the motor axons in the dorsal and ventral cord. In terms of biological role, has a role in synapse and axon development, and in axonal regrowth following injury. Its function is as follows. By forming heterooligomers with isoform a, acts as an inhibitor of isoform a activation. Its inhibitory function is independent of its catalytic activity. The sequence is that of Mitogen-activated protein kinase kinase kinase dlk-1 (dlk-1) from Caenorhabditis elegans.